A 75-amino-acid chain; its full sequence is uncharacterized protein (75 aa).

Residues 29–72 (EVYHVESGDTLWTIAKSFEIPVQQLMNLNKLSSDRIYPGQIIKI) enclose the LysM domain.

This is an uncharacterized protein from Bacillus subtilis (strain 168).